A 337-amino-acid polypeptide reads, in one-letter code: Serpentine receptor class beta-6 (337 aa).

7 helical membrane passes run 20–40 (QFYT…LIIF), 62–82 (ILIS…IPFL), 98–118 (IFQN…LGIT), 138–158 (IGVF…YFFF), 183–203 (WLCY…YFLV), 234–254 (TFIS…TLII), and 273–293 (GVYI…CVIL).

This sequence belongs to the nematode receptor-like protein srb family. As to expression, expressed in the ADL, ADF and ASH chemosensory neurons in the head and in the PHA and PHB chemosensory neurons in the tail. Low expression also observed in the egg-laying structures in the mid-body region.

Its subcellular location is the cell membrane. Mediates recognition and avoidance of Streptomyces species by detecting dodecanoic acid secreted by the bacteria. Also mediates avoidance of decanoic acid which is not secreted by Streptomyces species but this may represent an additional important avoidance response in the environment. The polypeptide is Serpentine receptor class beta-6 (srb-6) (Caenorhabditis elegans).